The sequence spans 473 residues: Aspartyl/glutamyl-tRNA(Asn/Gln) amidotransferase subunit B (473 aa).

This sequence belongs to the GatB/GatE family. GatB subfamily. As to quaternary structure, heterotrimer of A, B and C subunits.

The enzyme catalyses L-glutamyl-tRNA(Gln) + L-glutamine + ATP + H2O = L-glutaminyl-tRNA(Gln) + L-glutamate + ADP + phosphate + H(+). The catalysed reaction is L-aspartyl-tRNA(Asn) + L-glutamine + ATP + H2O = L-asparaginyl-tRNA(Asn) + L-glutamate + ADP + phosphate + 2 H(+). Allows the formation of correctly charged Asn-tRNA(Asn) or Gln-tRNA(Gln) through the transamidation of misacylated Asp-tRNA(Asn) or Glu-tRNA(Gln) in organisms which lack either or both of asparaginyl-tRNA or glutaminyl-tRNA synthetases. The reaction takes place in the presence of glutamine and ATP through an activated phospho-Asp-tRNA(Asn) or phospho-Glu-tRNA(Gln). The sequence is that of Aspartyl/glutamyl-tRNA(Asn/Gln) amidotransferase subunit B from Francisella tularensis subsp. tularensis (strain FSC 198).